Consider the following 243-residue polypeptide: Carboxy-S-adenosyl-L-methionine synthase (243 aa).

Residues Y40, 65 to 67, 90 to 91, 118 to 119, N133, and R200 each bind S-adenosyl-L-methionine; these read GCS, DN, and DI.

This sequence belongs to the class I-like SAM-binding methyltransferase superfamily. Cx-SAM synthase family. Homodimer.

It carries out the reaction prephenate + S-adenosyl-L-methionine = carboxy-S-adenosyl-L-methionine + 3-phenylpyruvate + H2O. Catalyzes the conversion of S-adenosyl-L-methionine (SAM) to carboxy-S-adenosyl-L-methionine (Cx-SAM). This is Carboxy-S-adenosyl-L-methionine synthase from Shewanella pealeana (strain ATCC 700345 / ANG-SQ1).